Consider the following 299-residue polypeptide: Large ribosomal subunit protein uL29m (299 aa).

Belongs to the universal ribosomal protein uL29 family. In terms of assembly, component of the mitochondrial large ribosomal subunit. Mature mitochondrial ribosomes consist of a small (37S) and a large (54S) subunit. The 37S subunit contains at least 33 different proteins and 1 molecule of RNA (15S). The 54S subunit contains at least 45 different proteins and 1 molecule of RNA (21S).

The protein localises to the mitochondrion. This is Large ribosomal subunit protein uL29m (MRPL4) from Scheffersomyces stipitis (strain ATCC 58785 / CBS 6054 / NBRC 10063 / NRRL Y-11545) (Yeast).